A 473-amino-acid polypeptide reads, in one-letter code: Bifunctional protein HldE (473 aa).

Residues 1 to 318 form a ribokinase region; that stretch reads MKLSMPRFDQ…RAIQREEGSE (318 aa). 194–197 is a binding site for ATP; the sequence is NLSE. Asp263 is an active-site residue. A cytidylyltransferase region spans residues 343-473; it reads FTNGCFDILH…TAIVEKIRKH (131 aa).

It in the N-terminal section; belongs to the carbohydrate kinase PfkB family. In the C-terminal section; belongs to the cytidylyltransferase family. In terms of assembly, homodimer.

It catalyses the reaction D-glycero-beta-D-manno-heptose 7-phosphate + ATP = D-glycero-beta-D-manno-heptose 1,7-bisphosphate + ADP + H(+). The enzyme catalyses D-glycero-beta-D-manno-heptose 1-phosphate + ATP + H(+) = ADP-D-glycero-beta-D-manno-heptose + diphosphate. It participates in nucleotide-sugar biosynthesis; ADP-L-glycero-beta-D-manno-heptose biosynthesis; ADP-L-glycero-beta-D-manno-heptose from D-glycero-beta-D-manno-heptose 7-phosphate: step 1/4. It functions in the pathway nucleotide-sugar biosynthesis; ADP-L-glycero-beta-D-manno-heptose biosynthesis; ADP-L-glycero-beta-D-manno-heptose from D-glycero-beta-D-manno-heptose 7-phosphate: step 3/4. Functionally, catalyzes the phosphorylation of D-glycero-D-manno-heptose 7-phosphate at the C-1 position to selectively form D-glycero-beta-D-manno-heptose-1,7-bisphosphate. In terms of biological role, catalyzes the ADP transfer from ATP to D-glycero-beta-D-manno-heptose 1-phosphate, yielding ADP-D-glycero-beta-D-manno-heptose. The protein is Bifunctional protein HldE of Pseudomonas entomophila (strain L48).